Consider the following 192-residue polypeptide: MSLYVVISPTGRTDGNIPARGYAGPSGRLDVIARAYNAILEPNATLAALLMGGPLPPRLLIAPLSCKDIVRSERSFMIEASRALRGRRSCFTVNDEGVEALASLLRRFKPRILLAEKGGDISSHWGEMCSSSPTFIAGSHLDPPHGLIKHLERSLGGFLRVSVGPLSLHTDHVFLLVSALRLPMHATSIEHH.

S-adenosyl-L-methionine is bound by residues Leu114 and Gly138.

The protein belongs to the methyltransferase superfamily. TrmY family. As to quaternary structure, homodimer.

The protein resides in the cytoplasm. The enzyme catalyses pseudouridine(54) in tRNA + S-adenosyl-L-methionine = N(1)-methylpseudouridine(54) in tRNA + S-adenosyl-L-homocysteine + H(+). Specifically catalyzes the N1-methylation of pseudouridine at position 54 (Psi54) in tRNAs. This chain is tRNA (pseudouridine(54)-N(1))-methyltransferase, found in Aeropyrum pernix (strain ATCC 700893 / DSM 11879 / JCM 9820 / NBRC 100138 / K1).